Reading from the N-terminus, the 100-residue chain is Urease subunit gamma (100 aa).

Belongs to the urease gamma subunit family. Heterotrimer of UreA (gamma), UreB (beta) and UreC (alpha) subunits. Three heterotrimers associate to form the active enzyme.

It localises to the cytoplasm. It carries out the reaction urea + 2 H2O + H(+) = hydrogencarbonate + 2 NH4(+). It participates in nitrogen metabolism; urea degradation; CO(2) and NH(3) from urea (urease route): step 1/1. This chain is Urease subunit gamma, found in Prochlorococcus marinus (strain NATL1A).